A 39-amino-acid polypeptide reads, in one-letter code: TTINVKCTSPKQCLPPCKEIYGRHAGAKCINGKCHCSKI.

3 cysteine pairs are disulfide-bonded: cysteine 7-cysteine 29, cysteine 13-cysteine 34, and cysteine 17-cysteine 36. At isoleucine 39 the chain carries Isoleucine amide.

This sequence belongs to the short scorpion toxin superfamily. Potassium channel inhibitor family. Alpha-KTx 02 subfamily. As to expression, expressed by the venom gland.

Its subcellular location is the secreted. Functionally, weakly blocks Kv1.3/KCNA3 voltage-gated potassium channels. The polypeptide is Potassium channel toxin alpha-KTx 2.18 (Centruroides limpidus (Mexican scorpion)).